The sequence spans 421 residues: Tol-Pal system protein TolB (421 aa).

The first 16 residues, 1-16 (MRILVFLWLGLSSLFA), serve as a signal peptide directing secretion.

This sequence belongs to the TolB family. The Tol-Pal system is composed of five core proteins: the inner membrane proteins TolA, TolQ and TolR, the periplasmic protein TolB and the outer membrane protein Pal. They form a network linking the inner and outer membranes and the peptidoglycan layer.

The protein localises to the periplasm. Functionally, part of the Tol-Pal system, which plays a role in outer membrane invagination during cell division and is important for maintaining outer membrane integrity. In Wolinella succinogenes (strain ATCC 29543 / DSM 1740 / CCUG 13145 / JCM 31913 / LMG 7466 / NCTC 11488 / FDC 602W) (Vibrio succinogenes), this protein is Tol-Pal system protein TolB.